The sequence spans 302 residues: Pseudouridine-5'-phosphate glycosidase (302 aa).

Glutamate 25 (proton donor) is an active-site residue. Positions 86 and 106 each coordinate substrate. Residue aspartate 138 participates in Mn(2+) binding. Residue 140-142 participates in substrate binding; it reads SAD. Lysine 159 functions as the Nucleophile in the catalytic mechanism.

It belongs to the pseudouridine-5'-phosphate glycosidase family. In terms of assembly, homotrimer. Mn(2+) is required as a cofactor.

The catalysed reaction is D-ribose 5-phosphate + uracil = psi-UMP + H2O. Catalyzes the reversible cleavage of pseudouridine 5'-phosphate (PsiMP) to ribose 5-phosphate and uracil. Functions biologically in the cleavage direction, as part of a pseudouridine degradation pathway. The chain is Pseudouridine-5'-phosphate glycosidase from Glaesserella parasuis serovar 5 (strain SH0165) (Haemophilus parasuis).